A 530-amino-acid polypeptide reads, in one-letter code: Calcium/calmodulin-dependent protein kinase type II alpha chain (530 aa).

In terms of domain architecture, Protein kinase spans 12–272 (DNYDIKEELG…AAEALKHPWI (261 aa)). ATP is bound by residues 20–28 (LGKGAFSIV) and K43. The active-site Proton acceptor is the D136. Position 287 is a phosphothreonine; by autocatalysis (T287). The interval 291 to 301 (LKKFNARRKLK) is calmodulin-binding. A phosphothreonine; by autocatalysis mark is found at T306 and T307. Residues 320 to 358 (ITKKGEGSQVKESTDSSSTTLEDDDIKEDKKGTVDRSTT) form a disordered region. S327 carries the phosphoserine modification.

Belongs to the protein kinase superfamily. CAMK Ser/Thr protein kinase family. CaMK subfamily. In terms of assembly, interacts with CASK. In terms of processing, autophosphorylation at Thr-287 is independent of autophosphorylation at Thr-306 and Thr-307. As to expression, expressed at a high level in the central nervous system during the late embryonic stage. In adults, expression is more abundant in the head than in the body.

The enzyme catalyses L-seryl-[protein] + ATP = O-phospho-L-seryl-[protein] + ADP + H(+). It carries out the reaction L-threonyl-[protein] + ATP = O-phospho-L-threonyl-[protein] + ADP + H(+). Its activity is regulated as follows. CASK plays a role in regulation of CaMKII autophosphorylation. When complexed with CASK and in the presence Ca[2+]/CaM, autophosphorylation of Thr-287 causes constitutive activation of the kinase. In the absence of Ca[2+]/CaM, autophosphorylation of Thr-306 causes inactivation of the kinase. In terms of biological role, a key regulator of plasticity in synaptic physiology and behavior, alterations in its activity produce pleiotrophic effects that involve synaptic transmission and development as well as various aspects of behavior. Directly modulates eag potassium channels. This chain is Calcium/calmodulin-dependent protein kinase type II alpha chain (CaMKII), found in Drosophila melanogaster (Fruit fly).